The primary structure comprises 285 residues: Type II secretion system protein C (285 aa).

Over 1 to 27 (MARLQAFKDPSFHSLVATFRSLPLIRR) the chain is Cytoplasmic. Residues 28–48 (FVLGLILLLICQQLAVLTWRF) form a helical membrane-spanning segment. Topologically, residues 49–285 (LLPEDSRIVG…DIYLALDGDH (237 aa)) are periplasmic.

The protein belongs to the GSP C family.

Its subcellular location is the cell inner membrane. Involved in a type II secretion system (T2SS, formerly general secretion pathway, GSP) for the export of proteins. Required for the translocation of the multiple pectic enzymes. This is Type II secretion system protein C (outC) from Pectobacterium carotovorum subsp. carotovorum (Erwinia carotovora subsp. carotovora).